A 203-amino-acid polypeptide reads, in one-letter code: Probable flagellin 1 (203 aa).

The propeptide occupies 1–11 (MGMRFLKNEKG).

Belongs to the archaeal flagellin family.

It is found in the archaeal flagellum. Flagellin is the subunit protein which polymerizes to form the filaments of archaeal flagella. The sequence is that of Probable flagellin 1 (flaB1) from Archaeoglobus fulgidus (strain ATCC 49558 / DSM 4304 / JCM 9628 / NBRC 100126 / VC-16).